A 407-amino-acid polypeptide reads, in one-letter code: Inhibin beta B chain (407 aa).

The N-terminal stretch at 1 to 28 (MDGLPGRALGAACLLLLAAGWLGPEAWG) is a signal peptide. The interval 26–62 (AWGSPTPPPTPAAPPPPPPPGSPGGSQDTCTSCGGFR) is disordered. Positions 29-292 (SPTPPPTPAA…GDSRHRIRKR (264 aa)) are excised as a propeptide. A compositionally biased stretch (pro residues) spans 30-47 (PTPPPTPAAPPPPPPPGS). N-linked (GlcNAc...) asparagine glycosylation is present at Asn93. Disulfide bonds link Cys296-Cys304, Cys303-Cys372, Cys332-Cys404, and Cys336-Cys406.

The protein belongs to the TGF-beta family. In terms of assembly, dimeric, linked by one or more disulfide bonds. Inhibin B is a dimer of alpha and beta-B. Activin B is a homodimer of beta-B. Activin AB is a dimer of beta-A and beta-B. Interacts with FST and FSTL3. Activin B interacts with BMPR2.

It is found in the secreted. In terms of biological role, inhibins and activins inhibit and activate, respectively, the secretion of follitropin by the pituitary gland. Inhibins/activins are involved in regulating a number of diverse functions such as hypothalamic and pituitary hormone secretion, gonadal hormone secretion, germ cell development and maturation, erythroid differentiation, insulin secretion, nerve cell survival, embryonic axial development or bone growth, depending on their subunit composition. Inhibins appear to oppose the functions of activins. Its function is as follows. Activin B is a dimer of alpha and beta-B that plays a role in several essential biological processes including embryonic development, stem cell maintenance and differentiation, haematopoiesis, cell proliferation and wound healing. Signals through type I receptor ACVR1C, abundantly expressed in pancreatic beta cells, and type II receptors like ACVR2A or BMPR2. Upon ligand binding, these receptors phosphorylate intracellular signaling mediators SMAD2 and SMAD3, which form a complex with SMAD4, translocate to the nucleus, and regulate gene expression. Plays a crucial role in the induction of hepcidin by inflammation through activation of ACVR1C and subsequent phosphorylation of SMAD1/5/8. Regulates adipocyte lipid metabolism by decreasing non-esterified fatty acids and glycerol release and increases intracellular triglyceride content. Stimulates wound healing by promoting cell migration and hair follicle regeneration through the JNK and ERK signaling pathways downstream of RHOA. Functionally, inhibin B is a dimer of alpha and beta-B that plays a crucial role in the regulation of the reproductive system by inhibiting the secretion of follicle-stimulating hormone (FSH) from the anterior pituitary gland. Thereby, maintains reproductive homeostasis in both males and females. Acts as a more potent suppressor of FSH release than inhibin A. Functions as competitive receptor antagonist binding activin type II receptors with high affinity in the presence of the TGF-beta type III coreceptor/TGFBR3L. The polypeptide is Inhibin beta B chain (INHBB) (Homo sapiens (Human)).